The primary structure comprises 117 residues: Large ribosomal subunit protein bL20 (117 aa).

Belongs to the bacterial ribosomal protein bL20 family.

Binds directly to 23S ribosomal RNA and is necessary for the in vitro assembly process of the 50S ribosomal subunit. It is not involved in the protein synthesizing functions of that subunit. This chain is Large ribosomal subunit protein bL20, found in Campylobacter hominis (strain ATCC BAA-381 / DSM 21671 / CCUG 45161 / LMG 19568 / NCTC 13146 / CH001A).